A 183-amino-acid chain; its full sequence is Nascent polypeptide-associated complex subunit beta (183 aa).

An NAC-A/B domain is found at 62–127 (GADDKKLQTT…GEEKELTELV (66 aa)). Residues 150–183 (QNMQKQAGTEGKKDEDEDDIPDLVEGENFESNVE) are disordered. The segment covering 164 to 183 (EDEDDIPDLVEGENFESNVE) has biased composition (acidic residues).

The protein belongs to the NAC-beta family. As to quaternary structure, part of the nascent polypeptide-associated complex (NAC), consisting of egd2 and egd1. NAC associates with ribosomes via egd1.

Its subcellular location is the cytoplasm. It is found in the nucleus. Component of the nascent polypeptide-associated complex (NAC), a dynamic component of the ribosomal exit tunnel, protecting the emerging polypeptides from interaction with other cytoplasmic proteins to ensure appropriate nascent protein targeting. The NAC complex also promotes mitochondrial protein import by enhancing productive ribosome interactions with the outer mitochondrial membrane and blocks the inappropriate interaction of ribosomes translating non-secretory nascent polypeptides with translocation sites in the membrane of the endoplasmic reticulum. EGD1 may act as a transcription factor that exert a negative effect on the expression of several genes that are transcribed by RNA polymerase II. The chain is Nascent polypeptide-associated complex subunit beta (egd1) from Neosartorya fischeri (strain ATCC 1020 / DSM 3700 / CBS 544.65 / FGSC A1164 / JCM 1740 / NRRL 181 / WB 181) (Aspergillus fischerianus).